The primary structure comprises 425 residues: Dihydroorotase (425 aa).

Zn(2+)-binding residues include His61 and His63. Substrate contacts are provided by residues 63–65 (HLR) and Asn95. Residues Asp153, His180, and His233 each contribute to the Zn(2+) site. A substrate-binding site is contributed by Asn279. Asp306 lines the Zn(2+) pocket. Residue Asp306 is part of the active site. Position 310 (His310) interacts with substrate.

It belongs to the metallo-dependent hydrolases superfamily. DHOase family. Class I DHOase subfamily. Zn(2+) is required as a cofactor.

The enzyme catalyses (S)-dihydroorotate + H2O = N-carbamoyl-L-aspartate + H(+). It participates in pyrimidine metabolism; UMP biosynthesis via de novo pathway; (S)-dihydroorotate from bicarbonate: step 3/3. Its function is as follows. Catalyzes the reversible cyclization of carbamoyl aspartate to dihydroorotate. This chain is Dihydroorotase, found in Geobacter sp. (strain M21).